The sequence spans 252 residues: Aquaporin TIP4-4 (252 aa).

The next 2 helical transmembrane spans lie at 20–40 (AVLAELILTFLFVFAGVGSAM) and 53–73 (VVGLTAVALAHTLVVAVMVSA). The NPA 1 signature appears at 83-85 (NPA). 3 consecutive transmembrane segments (helical) span residues 105–125 (VAAQLLGSTLACLLLAFLAVA), 143–163 (GVLMEAVLTFSLLFAVYATVV), and 168–188 (AVGGMGPLLVGLVVGANVLAG). The NPA 2 motif lies at 197–199 (NPA). The helical transmembrane segment at 216-236 (VYWVGPLIGGPLAGLVYDGLF) threads the bilayer.

Belongs to the MIP/aquaporin (TC 1.A.8) family. TIP (TC 1.A.8.10) subfamily.

The protein resides in the vacuole membrane. In terms of biological role, aquaporins facilitate the transport of water and small neutral solutes across cell membranes. This chain is Aquaporin TIP4-4 (TIP4-4), found in Zea mays (Maize).